The chain runs to 555 residues: Potassium-transporting ATPase potassium-binding subunit (555 aa).

Transmembrane regions (helical) follow at residues 2-22, 60-80, 130-150, 173-193, 246-266, 278-298, 374-394, 412-432, 483-503, and 525-545; these read IWVA…PTGI, QYAL…YFIF, IGIT…VMAF, VFLP…VPQT, MSNI…PFTY, ILFV…TTSE, AGFV…GLMV, LIAV…ALAL, LVMF…AASL, and GIFI…MLVL.

It belongs to the KdpA family. As to quaternary structure, the system is composed of three essential subunits: KdpA, KdpB and KdpC.

The protein resides in the cell membrane. Its function is as follows. Part of the high-affinity ATP-driven potassium transport (or Kdp) system, which catalyzes the hydrolysis of ATP coupled with the electrogenic transport of potassium into the cytoplasm. This subunit binds the extracellular potassium ions and delivers the ions to the membrane domain of KdpB through an intramembrane tunnel. In Bacillus thuringiensis subsp. konkukian (strain 97-27), this protein is Potassium-transporting ATPase potassium-binding subunit.